We begin with the raw amino-acid sequence, 161 residues long: Nucleotide-binding protein Ajs_2750 (161 aa).

It belongs to the YajQ family.

Nucleotide-binding protein. This chain is Nucleotide-binding protein Ajs_2750, found in Acidovorax sp. (strain JS42).